Reading from the N-terminus, the 394-residue chain is Queuine tRNA-ribosyltransferase accessory subunit 2 (394 aa).

Zn(2+)-binding residues include Cys336, Cys338, Cys341, and His367.

This sequence belongs to the queuine tRNA-ribosyltransferase family. QTRT2 subfamily. As to quaternary structure, heterodimer of a catalytic subunit and an accessory subunit. Requires Zn(2+) as cofactor.

It localises to the cytoplasm. Non-catalytic subunit of the queuine tRNA-ribosyltransferase (TGT) that catalyzes the base-exchange of a guanine (G) residue with queuine (Q) at position 34 (anticodon wobble position) in tRNAs with GU(N) anticodons (tRNA-Asp, -Asn, -His and -Tyr), resulting in the hypermodified nucleoside queuosine (7-(((4,5-cis-dihydroxy-2-cyclopenten-1-yl)amino)methyl)-7-deazaguanosine). The chain is Queuine tRNA-ribosyltransferase accessory subunit 2 from Ixodes scapularis (Black-legged tick).